We begin with the raw amino-acid sequence, 475 residues long: Ribulose bisphosphate carboxylase large chain (475 aa).

A propeptide spanning residues 1 to 2 (MS) is cleaved from the precursor. Pro3 bears the N-acetylproline mark. Lys14 is modified (N6,N6,N6-trimethyllysine). Residues Asn123 and Thr173 each coordinate substrate. Lys175 functions as the Proton acceptor in the catalytic mechanism. Residue Lys177 coordinates substrate. Residues Lys201, Asp203, and Glu204 each contribute to the Mg(2+) site. Lys201 is modified (N6-carboxylysine). The active-site Proton acceptor is His294. Positions 295, 327, and 379 each coordinate substrate.

This sequence belongs to the RuBisCO large chain family. Type I subfamily. Heterohexadecamer of 8 large chains and 8 small chains; disulfide-linked. The disulfide link is formed within the large subunit homodimers. Requires Mg(2+) as cofactor. In terms of processing, the disulfide bond which can form in the large chain dimeric partners within the hexadecamer appears to be associated with oxidative stress and protein turnover.

The protein resides in the plastid. The protein localises to the chloroplast. It catalyses the reaction 2 (2R)-3-phosphoglycerate + 2 H(+) = D-ribulose 1,5-bisphosphate + CO2 + H2O. It carries out the reaction D-ribulose 1,5-bisphosphate + O2 = 2-phosphoglycolate + (2R)-3-phosphoglycerate + 2 H(+). RuBisCO catalyzes two reactions: the carboxylation of D-ribulose 1,5-bisphosphate, the primary event in carbon dioxide fixation, as well as the oxidative fragmentation of the pentose substrate in the photorespiration process. Both reactions occur simultaneously and in competition at the same active site. The sequence is that of Ribulose bisphosphate carboxylase large chain from Bouvardia ternifolia (Firecrackerbush).